Consider the following 223-residue polypeptide: UPF0319 protein VPA1584 (223 aa).

The first 21 residues, 1–21, serve as a signal peptide directing secretion; sequence MKLIKPLTCALALAMSGMAFA.

The protein belongs to the UPF0319 family.

The protein is UPF0319 protein VPA1584 of Vibrio parahaemolyticus serotype O3:K6 (strain RIMD 2210633).